Reading from the N-terminus, the 425-residue chain is UPF0597 protein VF_0641 (425 aa).

It belongs to the UPF0597 family.

The sequence is that of UPF0597 protein VF_0641 from Aliivibrio fischeri (strain ATCC 700601 / ES114) (Vibrio fischeri).